A 273-amino-acid chain; its full sequence is Putative pyruvate, phosphate dikinase regulatory protein (273 aa).

Residue 151–158 (GVSRTSKT) coordinates ADP.

This sequence belongs to the pyruvate, phosphate/water dikinase regulatory protein family. PDRP subfamily.

The catalysed reaction is N(tele)-phospho-L-histidyl/L-threonyl-[pyruvate, phosphate dikinase] + ADP = N(tele)-phospho-L-histidyl/O-phospho-L-threonyl-[pyruvate, phosphate dikinase] + AMP + H(+). It carries out the reaction N(tele)-phospho-L-histidyl/O-phospho-L-threonyl-[pyruvate, phosphate dikinase] + phosphate + H(+) = N(tele)-phospho-L-histidyl/L-threonyl-[pyruvate, phosphate dikinase] + diphosphate. Bifunctional serine/threonine kinase and phosphorylase involved in the regulation of the pyruvate, phosphate dikinase (PPDK) by catalyzing its phosphorylation/dephosphorylation. In Desulfitobacterium hafniense (strain DSM 10664 / DCB-2), this protein is Putative pyruvate, phosphate dikinase regulatory protein.